A 414-amino-acid polypeptide reads, in one-letter code: Isocitrate dehydrogenase [NADP] cytoplasmic (414 aa).

An N-acetylserine modification is found at serine 2. Tyrosine 42 carries the phosphotyrosine modification. 75-77 contributes to the NADP(+) binding site; the sequence is TIT. Threonine 77 serves as a coordination point for substrate. At lysine 81 the chain carries N6-acetyllysine. An NADP(+)-binding site is contributed by arginine 82. Substrate contacts are provided by residues 94–100 and arginine 109; that span reads SPNGTIR. The residue at position 126 (lysine 126) is an N6-succinyllysine. Substrate contacts are provided by arginine 132 and lysine 212. Lysine 224, lysine 233, and lysine 243 each carry N6-acetyllysine. Aspartate 252 contributes to the Mn(2+) binding site. Lysine 260 is an NADP(+) binding site. The Mn(2+) site is built by aspartate 275 and aspartate 279. Position 310–315 (310–315) interacts with NADP(+); it reads GTVTRH. The residue at position 321 (lysine 321) is an N6-acetyllysine. Asparagine 328 provides a ligand contact to NADP(+). Serine 389 is subject to Phosphoserine. Lysine 400 carries the post-translational modification N6-succinyllysine.

It belongs to the isocitrate and isopropylmalate dehydrogenases family. In terms of assembly, homodimer. Mg(2+) is required as a cofactor. It depends on Mn(2+) as a cofactor. Post-translationally, acetylation at Lys-374 dramatically reduces catalytic activity.

Its subcellular location is the cytoplasm. The protein resides in the cytosol. The enzyme catalyses D-threo-isocitrate + NADP(+) = 2-oxoglutarate + CO2 + NADPH. Its function is as follows. Catalyzes the NADP(+)-dependent oxidative decarboxylation of isocitrate (D-threo-isocitrate) to 2-ketoglutarate (2-oxoglutarate), which is required by other enzymes such as the phytanoyl-CoA dioxygenase. Plays a critical role in the generation of NADPH, an important cofactor in many biosynthesis pathways. May act as a corneal epithelial crystallin and may be involved in maintaining corneal epithelial transparency. This Microtus mexicanus (Mexican vole) protein is Isocitrate dehydrogenase [NADP] cytoplasmic (IDH1).